A 468-amino-acid chain; its full sequence is ATP synthase subunit beta (468 aa).

148-155 (GGAGVGKT) contacts ATP.

It belongs to the ATPase alpha/beta chains family. In terms of assembly, F-type ATPases have 2 components, CF(1) - the catalytic core - and CF(0) - the membrane proton channel. CF(1) has five subunits: alpha(3), beta(3), gamma(1), delta(1), epsilon(1). CF(0) has three main subunits: a(1), b(2) and c(9-12). The alpha and beta chains form an alternating ring which encloses part of the gamma chain. CF(1) is attached to CF(0) by a central stalk formed by the gamma and epsilon chains, while a peripheral stalk is formed by the delta and b chains.

The protein localises to the cell inner membrane. The catalysed reaction is ATP + H2O + 4 H(+)(in) = ADP + phosphate + 5 H(+)(out). Produces ATP from ADP in the presence of a proton gradient across the membrane. The catalytic sites are hosted primarily by the beta subunits. The sequence is that of ATP synthase subunit beta from Stenotrophomonas maltophilia (strain R551-3).